Here is a 311-residue protein sequence, read N- to C-terminus: MIKLLFMGTPQFSATVLKGLLDNPAYEILGVVTQPDRAVGRKKDIKVTPVKQLALEHGISIYQPEKLSGSQELIEIMGLGADGIITAAFGQFLPTLLLDSVSFAINVHASLLPKYRGGAPIHYAIMNGDKEAGVTIMEMIKEMDAGDMVAKASTPILETDNVGTLFEKLAIIGRDLLLDSLPAYLSGELKPIPQDHSQATFSPNISPEQEKLDWTMSNQEVFSHIRGMNPWPVAHTFLEGQRLKIYEAQLAEGEGLPGQVIVKTKKSLVIATGQGALSLIVVQPAGKPKMSIIDFLNGIGRKLEVGDIIGR.

110-113 (SLLP) is a binding site for (6S)-5,6,7,8-tetrahydrofolate.

Belongs to the Fmt family.

The catalysed reaction is L-methionyl-tRNA(fMet) + (6R)-10-formyltetrahydrofolate = N-formyl-L-methionyl-tRNA(fMet) + (6S)-5,6,7,8-tetrahydrofolate + H(+). Functionally, attaches a formyl group to the free amino group of methionyl-tRNA(fMet). The formyl group appears to play a dual role in the initiator identity of N-formylmethionyl-tRNA by promoting its recognition by IF2 and preventing the misappropriation of this tRNA by the elongation apparatus. This is Methionyl-tRNA formyltransferase from Streptococcus pyogenes serotype M18 (strain MGAS8232).